Here is a 413-residue protein sequence, read N- to C-terminus: Chemotactic signal transduction system substrate-binding protein BasB (413 aa).

Positions 1-31 (MHSTTRREWLGAIGATAATGLAGCAGVGGAG) are cleaved as a signal peptide.

The protein localises to the cell membrane. Functionally, mediates chemotaxis towards five attractant amino acids (leucine, isoleucine, valine, methionine and cysteine). May function as a receptor that binds the amino acids and transduces a signal to BasT. Has probably no additional role in transport. This Halobacterium salinarum (strain ATCC 29341 / DSM 671 / R1) protein is Chemotactic signal transduction system substrate-binding protein BasB (basB).